Here is a 293-residue protein sequence, read N- to C-terminus: Ribosomal protein L11 methyltransferase (293 aa).

S-adenosyl-L-methionine-binding residues include Thr145, Gly166, Asp188, and Asn230.

It belongs to the methyltransferase superfamily. PrmA family.

The protein localises to the cytoplasm. The enzyme catalyses L-lysyl-[protein] + 3 S-adenosyl-L-methionine = N(6),N(6),N(6)-trimethyl-L-lysyl-[protein] + 3 S-adenosyl-L-homocysteine + 3 H(+). Its function is as follows. Methylates ribosomal protein L11. This Salmonella newport (strain SL254) protein is Ribosomal protein L11 methyltransferase.